The chain runs to 537 residues: ATP-dependent 6-phosphofructokinase 5, chloroplastic (537 aa).

A chloroplast-targeting transit peptide spans 1–52 (MDALSQAISSGISVPYKNNSSSLVPSHGLTSLILRKSRSPVNPSSRSRVSVR). The disordered stretch occupies residues 35–64 (RKSRSPVNPSSRSRVSVRASEIQHSKTSAS). Positions 39–54 (SPVNPSSRSRVSVRAS) are enriched in low complexity. Ser-147 is subject to Phosphoserine. ATP is bound by residues Gly-189, 253–254 (RG), and 278–281 (GNGT). Asn-279 provides a ligand contact to Mg(2+). Substrate-binding positions include 307–309 (TID), 352–354 (MGR), Glu-408, and 460–463 (YMIR). The Proton acceptor role is filled by Asp-309.

It belongs to the phosphofructokinase type A (PFKA) family. PPi-dependent PFK group II subfamily. Atypical ATP-dependent clade 'X' sub-subfamily. As to quaternary structure, homotetramer. Mg(2+) is required as a cofactor. In terms of tissue distribution, expressed in roots, leaves, stems and flowers.

Its subcellular location is the plastid. The protein localises to the chloroplast. It catalyses the reaction beta-D-fructose 6-phosphate + ATP = beta-D-fructose 1,6-bisphosphate + ADP + H(+). It participates in carbohydrate degradation; glycolysis; D-glyceraldehyde 3-phosphate and glycerone phosphate from D-glucose: step 3/4. Its activity is regulated as follows. Allosterically activated by AMP. Catalyzes the phosphorylation of D-fructose 6-phosphate to fructose 1,6-bisphosphate by ATP, the first committing step of glycolysis. The protein is ATP-dependent 6-phosphofructokinase 5, chloroplastic of Arabidopsis thaliana (Mouse-ear cress).